The following is a 56-amino-acid chain: Large ribosomal subunit protein bL33 (56 aa).

Belongs to the bacterial ribosomal protein bL33 family.

The polypeptide is Large ribosomal subunit protein bL33 (Treponema denticola (strain ATCC 35405 / DSM 14222 / CIP 103919 / JCM 8153 / KCTC 15104)).